The following is a 328-amino-acid chain: Formimidoylglutamase (328 aa).

Mn(2+) contacts are provided by H133, D159, H161, D163, D253, and D255.

Belongs to the arginase family. Requires Mn(2+) as cofactor.

The catalysed reaction is N-formimidoyl-L-glutamate + H2O = formamide + L-glutamate. Its pathway is amino-acid degradation; L-histidine degradation into L-glutamate; L-glutamate from N-formimidoyl-L-glutamate (hydrolase route): step 1/1. Its function is as follows. Catalyzes the conversion of N-formimidoyl-L-glutamate to L-glutamate and formamide. This is Formimidoylglutamase from Streptococcus pyogenes serotype M3 (strain ATCC BAA-595 / MGAS315).